We begin with the raw amino-acid sequence, 294 residues long: Diaminopimelate epimerase (294 aa).

Substrate-binding residues include asparagine 11 and asparagine 78. Cysteine 87 acts as the Proton donor in catalysis. Residues 88-89, asparagine 167, asparagine 203, and 221-222 contribute to the substrate site; these read GN and ER. Cysteine 230 serves as the catalytic Proton acceptor. A substrate-binding site is contributed by 231–232; that stretch reads GT.

The protein belongs to the diaminopimelate epimerase family. As to quaternary structure, homodimer.

It is found in the cytoplasm. The enzyme catalyses (2S,6S)-2,6-diaminopimelate = meso-2,6-diaminopimelate. It functions in the pathway amino-acid biosynthesis; L-lysine biosynthesis via DAP pathway; DL-2,6-diaminopimelate from LL-2,6-diaminopimelate: step 1/1. In terms of biological role, catalyzes the stereoinversion of LL-2,6-diaminopimelate (L,L-DAP) to meso-diaminopimelate (meso-DAP), a precursor of L-lysine and an essential component of the bacterial peptidoglycan. The protein is Diaminopimelate epimerase of Mycobacterium avium (strain 104).